The primary structure comprises 776 residues: Systemic RNA interference defective protein 1 (776 aa).

The first 17 residues, 1 to 17, serve as a signal peptide directing secretion; sequence MIRVYLIILMHLVIGLT. At 18–319 the chain is on the extracellular side; the sequence is QNNSTTPSPI…ENQSYAVPTA (302 aa). Residues Asn19, Asn20, Asn32, Asn205, Asn210, Asn234, Asn290, and Asn311 are each glycosylated (N-linked (GlcNAc...) asparagine). The tract at residues 22 to 312 is involved in dsRNA-binding; that stretch reads TTPSPIITSS…SFEFKKLENQ (291 aa). A helical transmembrane segment spans residues 320–340; it reads LMMIFLTTPCLLFLPIVINII. The Cytoplasmic portion of the chain corresponds to 341 to 429; that stretch reads KNSRKLAPSQ…KQDSLSLHGQ (89 aa). The segment at 360–390 is disordered; it reads PSEQRDMDLSHDEQQNTSSELENNGEIPAAE. A compositionally biased stretch (basic and acidic residues) spans 362–373; sequence EQRDMDLSHDEQ. Residues 430–450 traverse the membrane as a helical segment; it reads MLQYPVAIILPVLMHTAIEFH. Residues 451-481 are Extracellular-facing; the sequence is KWTTSTMANRDEMCFHNHACARPLGELRAWN. Residues 482–502 form a helical membrane-spanning segment; that stretch reads NIITNIGYTLYGAIFIVLSIC. Topologically, residues 503-510 are cytoplasmic; that stretch reads RRGRHEYS. The chain crosses the membrane as a helical span at residues 511-531; sequence HVFGTYECTLLDVTIGVFMVL. Residues 532–543 lie on the Extracellular side of the membrane; the sequence is QSIASATYHICP. Residues 544 to 564 form a helical membrane-spanning segment; sequence SDVAFQFDTPCIQVICGLLMV. Over 565-575 the chain is Cytoplasmic; the sequence is RQWFVRHESPS. A helical transmembrane segment spans residues 576-596; the sequence is PAYTNILLVGVVSLNFLISAF. Residues 597-599 lie on the Extracellular side of the membrane; sequence SKT. The chain crosses the membrane as a helical span at residues 600–620; the sequence is SYVRFIIAVIHVIVVGSICLA. The Cytoplasmic segment spans residues 621 to 633; the sequence is KERSLGSEKLKTR. A helical transmembrane segment spans residues 634 to 654; that stretch reads FFIMAFSMGNFAAIVMYLTLS. Residues 655-659 are Extracellular-facing; sequence AFHLN. A helical membrane pass occupies residues 660 to 680; sequence QIATYCFIINCIMYLMYYGCM. The Cytoplasmic segment spans residues 681–691; that stretch reads KVLHSERITSK. The chain crosses the membrane as a helical span at residues 692 to 712; the sequence is AKLCGALSLLAWAVAGFFFFQ. Residues 713–741 are Extracellular-facing; that stretch reads DDTDWTRSAAASRALNKPCLLLGFFGSHD. Residues 742-762 traverse the membrane as a helical segment; sequence LWHIFGALAGLFTFIFVSFVD. At 763 to 776 the chain is on the cytoplasmic side; sequence DDLINTRKTSINIF.

This sequence belongs to the SID1 family. In terms of assembly, may self-associate to form multimers. Expressed in most non-neuronal cells, including body wall muscle cells.

The protein resides in the cell membrane. Its function is as follows. Plays a role in RNA-mediated gene silencing by acting cell-autonomously as a channel for the transport of double-stranded RNA (dsRNA) between cells. Mediates the spread of dsRNA and subsequent silencing of genes in cells distant from the site of dsRNA introduction. Selective for dsRNA. Preferentially binds long dsRNA, from 50 base pairs up to 700. Short 20 base-pair long molecules are not bound. May also bind dsDNA, but with lower affinity. Binding may be sequence-independent. Required for avoidance behavior induced by small RNAs derived from pathogenic bacteria such as P.aeruginosa. In Caenorhabditis elegans, this protein is Systemic RNA interference defective protein 1.